The following is a 416-amino-acid chain: CinA-like protein (416 aa).

The protein belongs to the CinA family.

The protein is CinA-like protein of Syntrophomonas wolfei subsp. wolfei (strain DSM 2245B / Goettingen).